Consider the following 773-residue polypeptide: Molybdenum cofactor sulfurase (773 aa).

Lys-243 carries the N6-(pyridoxal phosphate)lysine modification. Cys-410 is an active-site residue. One can recognise an MOSC domain in the interval 632–773 (LRLLRQSGQR…LSCGDTVLVE (142 aa)). Ser-731 is modified (phosphoserine).

It belongs to the class-V pyridoxal-phosphate-dependent aminotransferase family. MOCOS subfamily. The cofactor is pyridoxal 5'-phosphate.

It catalyses the reaction Mo-molybdopterin + L-cysteine + AH2 = thio-Mo-molybdopterin + L-alanine + A + H2O. It functions in the pathway cofactor biosynthesis; molybdopterin biosynthesis. Its function is as follows. Sulfurates the molybdenum cofactor. Sulfation of molybdenum is essential for xanthine dehydrogenase (XDH) and aldehyde oxidase (ADO) enzymes in which molybdenum cofactor is liganded by 1 oxygen and 1 sulfur atom in active form. The sequence is that of Molybdenum cofactor sulfurase from Drosophila ananassae (Fruit fly).